A 92-amino-acid chain; its full sequence is Small ribosomal subunit protein uS19 (92 aa).

It belongs to the universal ribosomal protein uS19 family.

Functionally, protein S19 forms a complex with S13 that binds strongly to the 16S ribosomal RNA. The sequence is that of Small ribosomal subunit protein uS19 from Streptococcus agalactiae serotype Ia (strain ATCC 27591 / A909 / CDC SS700).